We begin with the raw amino-acid sequence, 35 residues long: Somatostatin (35 aa).

A disulfide bridge connects residues cysteine 24 and cysteine 35.

This sequence belongs to the somatostatin family.

It localises to the secreted. Somatostatin inhibits the release of somatotropin. This chain is Somatostatin (sst), found in Lampetra fluviatilis (European river lamprey).